The chain runs to 433 residues: MTASAKPVSSVDSFFSATLAEADPEIAAAIRGELGRQRHEIELIASENIVSRAVLEAQGSVMTNKYAEGYPGARYYGGCEWVDVAENLAIDRAKKLFGANFANVQPNSGSQMNQAVFLALLQPGDTFMGLDLAAGGHLTHGSPVNMSGKWFKAAHYTVRRDDHLIDMDAVAKQAEEVKPKLIIAGGSAYSRPWDFKRFREIADSVGAYLLVDMAHFAGLVAGGVHASPVPYAHITTTTTHKSLRGPRGGLMLWNDEQFTKKFNSAIFPGLQGGPLMHVIAAKAVAFAEALRPEFKAYAKNVVENAKALAESLRAQGFDIVSGGTDNHLMLVDLRPKGLKGNVSEKALVRAAITCNKNGIPFDPEKPFVTSGLRLGTPAATTRGFGVAEFQQVGSLIAEVLNAIAQGPDGSAPLVEAAVKEKVKALTDRFPIYQ.

(6S)-5,6,7,8-tetrahydrofolate contacts are provided by residues leucine 132 and 136–138; that span reads GHL. Lysine 241 bears the N6-(pyridoxal phosphate)lysine mark.

The protein belongs to the SHMT family. As to quaternary structure, homodimer. Pyridoxal 5'-phosphate is required as a cofactor.

It localises to the cytoplasm. The catalysed reaction is (6R)-5,10-methylene-5,6,7,8-tetrahydrofolate + glycine + H2O = (6S)-5,6,7,8-tetrahydrofolate + L-serine. It participates in one-carbon metabolism; tetrahydrofolate interconversion. Its pathway is amino-acid biosynthesis; glycine biosynthesis; glycine from L-serine: step 1/1. Its function is as follows. Catalyzes the reversible interconversion of serine and glycine with tetrahydrofolate (THF) serving as the one-carbon carrier. This reaction serves as the major source of one-carbon groups required for the biosynthesis of purines, thymidylate, methionine, and other important biomolecules. Also exhibits THF-independent aldolase activity toward beta-hydroxyamino acids, producing glycine and aldehydes, via a retro-aldol mechanism. The chain is Serine hydroxymethyltransferase from Bradyrhizobium sp. (strain ORS 278).